The primary structure comprises 918 residues: MIAAQLLAYYFTELKDDQVKKIDKYLYAMRLSDETLLDIMNRFKKEMKNGLSRDFNPTATVKMLPTFVRSIPDGSEKGDFIALDLGGSSFRILRVQVNHEQNRPVHMESEVYDTPENIMHGSGSQLFDHVLECLGDFMEKKKIKDKKLPVGFTFSFPCRQSKIDQAILITWTKRFKARGAEGNYVVKLLDKAIKKRGDYDANIVAVVNDTVGTMIDCGYDDQHCEVGLIIGTGTNACYMEELRQIDFGWGDDGRMCINTEWGDLGDDGSLEDIRKEFDREFRRGSLNPGKQRFEKMVSGRYMEDVVRLVLVKMAKEGLLFEGRITPELLTRGKFNTSDVSAIEKDKEGLHNAKEILTRLGVERSDDDCVSVQHVCTIVSFRSANLVAATLGAILNRLRDNKSTPRLRTTVRVDGSLYKTHPQYSRRFHKTLRRLVPDSDVRFLLSESGTGKGAAMVTAVAYRLAEQHRQIEETLAHFRLSKQTLMEVKKRLRTEMEMGLRKETNSNATVNMLPSFLRSIPDGTEDGDFLALDLGGTNFRVLLVKIRSGKKSTVEMHNKIYRIPIEIMQGTGEELFDHIVSCISDFLDYMGIKGPRMPLGFTFSFPCQQTSLDAGILITWTKGFKATDCVGHDVVTLLRDAVKRREEFDLDVVAVVNDTVGTMMTCAYEEPTCEVGLIVGTGSNACYMEEMKNVEMVEGNQRQMCINMEWGAFGDNGCSDDIRTDFDKVVDEYSLNSGNQRFENMISGIYLGEIVRNILIDFTKKGFLFRGQISEPLKTRGIFETKFLSQIESDRLALLQVRAILQQLGLNSTCDDSILVKTVCGVVSKRAAQLCGAGMAAVVEKIRENRGLDRLNVTVGVDGTLYKLHPQFSRIMHQTVKELSPKCNVSFLLSEDGSGKGAALITAVGVRLRGESAIS.

An N-acetylmethionine modification is found at methionine 1. The tract at residues 1–10 (MIAAQLLAYY) is mitochondrial-binding peptide (MBP). Hexokinase domains are found at residues 16–458 (DDQV…MVTA) and 464–906 (AEQH…LITA). Residues arginine 30 and 84 to 89 (DLGGSS) contribute to the ATP site. A hexokinase small subdomain 1 region spans residues 73–207 (DGSEKGDFIA…DYDANIVAVV (135 aa)). Position 84-91 (84-91 (DLGGSSFR)) interacts with D-glucose 6-phosphate. D-glucose contacts are provided by residues serine 155, 172 to 173 (TK), and 208 to 209 (ND). The hexokinase large subdomain 1 stretch occupies residues 208–447 (NDTVGTMIDC…SDVRFLLSES (240 aa)). D-glucose 6-phosphate is bound by residues aspartate 209 and threonine 232. D-glucose-binding positions include asparagine 235, glutamate 260, and 291-294 (QRFE). At serine 337 the chain carries Phosphoserine. 413-415 (DGS) is a D-glucose 6-phosphate binding site. ATP contacts are provided by residues 425-426 (RR) and 532-537 (DLGGTN). The interval 521 to 655 (DGTEDGDFLA…EFDLDVVAVV (135 aa)) is hexokinase small subdomain 2. 532 to 536 (DLGGT) contacts D-glucose 6-phosphate. Residues 603–604 (SF), 620–621 (TK), and 656–657 (ND) each bind D-glucose. The tract at residues 656–895 (NDTVGTMMTC…CNVSFLLSED (240 aa)) is hexokinase large subdomain 2. Residues aspartate 657 and threonine 680 each coordinate D-glucose 6-phosphate. Threonine 680 is a binding site for ATP. Residues 682 to 683 (SN), glutamate 708, and glutamate 742 contribute to the D-glucose site. Residues 747–748 (GI), 784–788 (TKFLS), and 863–867 (TLYKL) each bind ATP. Residues 861–863 (DGT) and serine 897 contribute to the D-glucose 6-phosphate site.

This sequence belongs to the hexokinase family. In terms of assembly, monomer. Interacts with RABL2/RABL2A; binds preferentially to GTP-bound RABL2. Interacts with VDAC1. The HK1-VDAC1 complex interacts with ATF2. Interacts (via N-terminal spermatogenic cell-specific region) with PFKM (via C-terminus). Interacts with SMAD5.

Its subcellular location is the mitochondrion outer membrane. The protein localises to the cytoplasm. It localises to the cytosol. The catalysed reaction is a D-hexose + ATP = a D-hexose 6-phosphate + ADP + H(+). It carries out the reaction D-fructose + ATP = D-fructose 6-phosphate + ADP + H(+). The enzyme catalyses D-glucose + ATP = D-glucose 6-phosphate + ADP + H(+). It catalyses the reaction D-mannose + ATP = D-mannose 6-phosphate + ADP + H(+). The catalysed reaction is D-glucosamine + ATP = D-glucosamine 6-phosphate + ADP + H(+). The protein operates within carbohydrate metabolism; hexose metabolism. Its pathway is carbohydrate degradation; glycolysis; D-glyceraldehyde 3-phosphate and glycerone phosphate from D-glucose: step 1/4. Hexokinase is an allosteric enzyme inhibited by its product D-glucose 6-phosphate. Hexokinase activity is inhibited by N-acetyl-D-glucosamine. Its function is as follows. Catalyzes the phosphorylation of various hexoses, such as D-glucose, D-glucosamine, D-fructose, D-mannose and 2-deoxy-D-glucose, to hexose 6-phosphate (D-glucose 6-phosphate, D-glucosamine 6-phosphate, D-fructose 6-phosphate, D-mannose 6-phosphate and 2-deoxy-D-glucose 6-phosphate, respectively). Does not phosphorylate N-acetyl-D-glucosamine. Mediates the initial step of glycolysis by catalyzing phosphorylation of D-glucose to D-glucose 6-phosphate. Involved in innate immunity and inflammation by acting as a pattern recognition receptor for bacterial peptidoglycan. When released in the cytosol, N-acetyl-D-glucosamine component of bacterial peptidoglycan inhibits the hexokinase activity of HK1 and causes its dissociation from mitochondrial outer membrane, thereby activating the NLRP3 inflammasome. In Bos taurus (Bovine), this protein is Hexokinase-1.